We begin with the raw amino-acid sequence, 523 residues long: Calcium-dependent protein kinase 34 (523 aa).

A disordered region spans residues 1–60 (MGNCCSHGRDSDDNKEEPRPENGGGGVGAAEASVRASKHPPASPPPATKQGPIGPVLGRP). Gly-2 carries the N-myristoyl glycine lipid modification. Positions 7–20 (HGRDSDDNKEEPRP) are enriched in basic and acidic residues. The region spanning 68 to 326 (YTLGKELGRG…AAQVLNHPWI (259 aa)) is the Protein kinase domain. Residues 74 to 82 (LGRGQFGVT) and Lys-97 each bind ATP. Catalysis depends on Asp-192, which acts as the Proton acceptor. Ser-232 carries the phosphoserine modification. Positions 332-362 (APDVPLDNAVMSRLKQFKAMNNFKKVALRVI) are autoinhibitory domain. EF-hand domains lie at 369-404 (EEIM…QGTR), 405-440 (LSEY…INRL), 441-476 (DREE…FGMN), and 480-511 (DIKE…GNPD). Residues Asp-382, Asp-384, Ser-386, Thr-388, Glu-393, Asp-418, Asp-420, Asn-422, Thr-424, Glu-429, Asp-454, Asp-456, Ser-458, Tyr-460, Glu-465, Asp-489, Asp-491, Asp-493, Arg-495, and Glu-500 each coordinate Ca(2+).

It belongs to the protein kinase superfamily. Ser/Thr protein kinase family. CDPK subfamily.

Its subcellular location is the membrane. It carries out the reaction L-seryl-[protein] + ATP = O-phospho-L-seryl-[protein] + ADP + H(+). The catalysed reaction is L-threonyl-[protein] + ATP = O-phospho-L-threonyl-[protein] + ADP + H(+). With respect to regulation, activated by calcium. Autophosphorylation may play an important role in the regulation of the kinase activity. May play a role in signal transduction pathways that involve calcium as a second messenger. The polypeptide is Calcium-dependent protein kinase 34 (CPK34) (Arabidopsis thaliana (Mouse-ear cress)).